A 393-amino-acid polypeptide reads, in one-letter code: Branched-chain-amino-acid aminotransferase, mitochondrial (393 aa).

A mitochondrion-targeting transit peptide spans 1-27; the sequence is MAAATLGQVWARKLLPVPWLLCGSKRC. Substrate is bound at residue tyrosine 169. Position 230 is an N6-(pyridoxal phosphate)lysine (lysine 230). Lysine 322 is subject to N6-acetyllysine.

Belongs to the class-IV pyridoxal-phosphate-dependent aminotransferase family. Homodimer. It depends on pyridoxal 5'-phosphate as a cofactor.

The protein resides in the mitochondrion. It catalyses the reaction L-leucine + 2-oxoglutarate = 4-methyl-2-oxopentanoate + L-glutamate. The enzyme catalyses L-isoleucine + 2-oxoglutarate = (S)-3-methyl-2-oxopentanoate + L-glutamate. The catalysed reaction is L-valine + 2-oxoglutarate = 3-methyl-2-oxobutanoate + L-glutamate. In terms of biological role, catalyzes the first reaction in the catabolism of the essential branched chain amino acids leucine, isoleucine, and valine. May also function as a transporter of branched chain alpha-keto acids. In Mus musculus (Mouse), this protein is Branched-chain-amino-acid aminotransferase, mitochondrial (Bcat2).